We begin with the raw amino-acid sequence, 376 residues long: Succinyl-diaminopimelate desuccinylase (376 aa).

Zn(2+) is bound at residue His67. Asp69 is a catalytic residue. Asp100 contacts Zn(2+). Glu134 (proton acceptor) is an active-site residue. Residues Glu135, Glu163, and His349 each coordinate Zn(2+).

This sequence belongs to the peptidase M20A family. DapE subfamily. As to quaternary structure, homodimer. The cofactor is Zn(2+). Co(2+) serves as cofactor.

It catalyses the reaction N-succinyl-(2S,6S)-2,6-diaminopimelate + H2O = (2S,6S)-2,6-diaminopimelate + succinate. It functions in the pathway amino-acid biosynthesis; L-lysine biosynthesis via DAP pathway; LL-2,6-diaminopimelate from (S)-tetrahydrodipicolinate (succinylase route): step 3/3. Its function is as follows. Catalyzes the hydrolysis of N-succinyl-L,L-diaminopimelic acid (SDAP), forming succinate and LL-2,6-diaminopimelate (DAP), an intermediate involved in the bacterial biosynthesis of lysine and meso-diaminopimelic acid, an essential component of bacterial cell walls. The polypeptide is Succinyl-diaminopimelate desuccinylase (Shewanella sediminis (strain HAW-EB3)).